Consider the following 460-residue polypeptide: L-seryl-tRNA(Sec) selenium transferase (460 aa).

An N6-(pyridoxal phosphate)lysine modification is found at Lys-293.

This sequence belongs to the SelA family. Pyridoxal 5'-phosphate serves as cofactor.

It localises to the cytoplasm. The catalysed reaction is L-seryl-tRNA(Sec) + selenophosphate + H(+) = L-selenocysteinyl-tRNA(Sec) + phosphate. It functions in the pathway aminoacyl-tRNA biosynthesis; selenocysteinyl-tRNA(Sec) biosynthesis; selenocysteinyl-tRNA(Sec) from L-seryl-tRNA(Sec) (bacterial route): step 1/1. Converts seryl-tRNA(Sec) to selenocysteinyl-tRNA(Sec) required for selenoprotein biosynthesis. The sequence is that of L-seryl-tRNA(Sec) selenium transferase from Pasteurella multocida (strain Pm70).